Consider the following 280-residue polypeptide: Elongation factor Ts (280 aa).

The segment at 82–85 is involved in Mg(2+) ion dislocation from EF-Tu; sequence TDFV.

This sequence belongs to the EF-Ts family.

The protein localises to the cytoplasm. Associates with the EF-Tu.GDP complex and induces the exchange of GDP to GTP. It remains bound to the aminoacyl-tRNA.EF-Tu.GTP complex up to the GTP hydrolysis stage on the ribosome. In Baumannia cicadellinicola subsp. Homalodisca coagulata, this protein is Elongation factor Ts.